Reading from the N-terminus, the 408-residue chain is Solute carrier family 35 member F1 (408 aa).

The interval Met1–His21 is disordered. Transmembrane regions (helical) follow at residues Met60 to Thr80, Val94 to Val114, Trp129 to Val147, Ile158 to Leu178, Phe186 to Val206, Leu221 to Ile241, Val247 to Ile267, Leu284 to Ile304, Ser311 to Phe331, and Phe335 to Ser355.

This sequence belongs to the SLC35F solute transporter family.

It is found in the cytoplasmic vesicle. It localises to the secretory vesicle. The protein resides in the synaptic vesicle membrane. Putative solute transporter. The sequence is that of Solute carrier family 35 member F1 (SLC35F1) from Homo sapiens (Human).